The primary structure comprises 209 residues: A-type ATP synthase subunit D (209 aa).

This sequence belongs to the V-ATPase D subunit family. As to quaternary structure, has multiple subunits with at least A(3), B(3), C, D, E, F, H, I and proteolipid K(x).

It is found in the cell membrane. Component of the A-type ATP synthase that produces ATP from ADP in the presence of a proton gradient across the membrane. The protein is A-type ATP synthase subunit D of Methanosarcina acetivorans (strain ATCC 35395 / DSM 2834 / JCM 12185 / C2A).